The chain runs to 159 residues: Phosphopantetheine adenylyltransferase (159 aa).

T10 provides a ligand contact to substrate. Residues 10–11 (TF) and H18 each bind ATP. Residues K42, M74, and R88 each coordinate substrate. ATP is bound by residues 89–91 (GLR), E99, and 124–130 (WSFISSS).

It belongs to the bacterial CoaD family. As to quaternary structure, homohexamer. Mg(2+) is required as a cofactor.

It is found in the cytoplasm. It catalyses the reaction (R)-4'-phosphopantetheine + ATP + H(+) = 3'-dephospho-CoA + diphosphate. It functions in the pathway cofactor biosynthesis; coenzyme A biosynthesis; CoA from (R)-pantothenate: step 4/5. Functionally, reversibly transfers an adenylyl group from ATP to 4'-phosphopantetheine, yielding dephospho-CoA (dPCoA) and pyrophosphate. The polypeptide is Phosphopantetheine adenylyltransferase (Escherichia coli (strain UTI89 / UPEC)).